A 293-amino-acid polypeptide reads, in one-letter code: Acetylglutamate kinase (293 aa).

Substrate is bound by residues 68–69, Arg90, and Asn189; that span reads GG.

It belongs to the acetylglutamate kinase family. ArgB subfamily.

It localises to the cytoplasm. It catalyses the reaction N-acetyl-L-glutamate + ATP = N-acetyl-L-glutamyl 5-phosphate + ADP. It functions in the pathway amino-acid biosynthesis; L-arginine biosynthesis; N(2)-acetyl-L-ornithine from L-glutamate: step 2/4. Catalyzes the ATP-dependent phosphorylation of N-acetyl-L-glutamate. The polypeptide is Acetylglutamate kinase (Mycobacterium marinum (strain ATCC BAA-535 / M)).